The sequence spans 651 residues: Beta-mannosyltransferase 7 (651 aa).

The Cytoplasmic segment spans residues 1 to 19; sequence MKLEMSSYLHKVPNTGITN. A helical membrane pass occupies residues 20–42; it reads LSNSKSIVFIMFCATLLFIITSS. Residues 43–651 are Extracellular-facing; sequence RYLTGSESLG…VKIDEKSEET (609 aa). N-linked (GlcNAc...) asparagine glycosylation is found at Asn-271 and Asn-423.

Belongs to the BMT family.

It is found in the membrane. In terms of biological role, beta-mannosyltransferase involved in cell wall biosynthesis through beta-1,2-mannosylation of cell wall phosphopeptidomannan. The chain is Beta-mannosyltransferase 7 (BMT7) from Candida albicans (strain SC5314 / ATCC MYA-2876) (Yeast).